A 294-amino-acid chain; its full sequence is Indole-3-glycerol phosphate synthase (294 aa).

The protein belongs to the TrpC family.

The enzyme catalyses 1-(2-carboxyphenylamino)-1-deoxy-D-ribulose 5-phosphate + H(+) = (1S,2R)-1-C-(indol-3-yl)glycerol 3-phosphate + CO2 + H2O. It participates in amino-acid biosynthesis; L-tryptophan biosynthesis; L-tryptophan from chorismate: step 4/5. This Parasynechococcus marenigrum (strain WH8102) protein is Indole-3-glycerol phosphate synthase.